A 143-amino-acid chain; its full sequence is 6,7-dimethyl-8-ribityllumazine synthase (143 aa).

5-amino-6-(D-ribitylamino)uracil is bound by residues phenylalanine 13, 45–47, and 69–71; these read TFD and CVI. 74-75 contacts (2S)-2-hydroxy-3-oxobutyl phosphate; the sequence is ET. Histidine 77 (proton donor) is an active-site residue. 5-amino-6-(D-ribitylamino)uracil is bound at residue leucine 102. A (2S)-2-hydroxy-3-oxobutyl phosphate-binding site is contributed by arginine 117.

The protein belongs to the DMRL synthase family.

It carries out the reaction (2S)-2-hydroxy-3-oxobutyl phosphate + 5-amino-6-(D-ribitylamino)uracil = 6,7-dimethyl-8-(1-D-ribityl)lumazine + phosphate + 2 H2O + H(+). The protein operates within cofactor biosynthesis; riboflavin biosynthesis; riboflavin from 2-hydroxy-3-oxobutyl phosphate and 5-amino-6-(D-ribitylamino)uracil: step 1/2. Catalyzes the formation of 6,7-dimethyl-8-ribityllumazine by condensation of 5-amino-6-(D-ribitylamino)uracil with 3,4-dihydroxy-2-butanone 4-phosphate. This is the penultimate step in the biosynthesis of riboflavin. The polypeptide is 6,7-dimethyl-8-ribityllumazine synthase (Archaeoglobus fulgidus (strain ATCC 49558 / DSM 4304 / JCM 9628 / NBRC 100126 / VC-16)).